The primary structure comprises 110 residues: Chloride intracellular channel protein 1 (110 aa).

The residue at position 2 (A2) is an N-acetylalanine. The segment at 2–90 (AEEQPQVELF…EEFLEAVLCP (89 aa)) is required for insertion into the membrane. The residue at position 13 (K13) is an N6-acetyllysine. A G-site motif is present at residues 24–27 (CPFS). The cysteines at positions 24 and 59 are disulfide-linked. The chain crosses the membrane as a helical span at residues 26–46 (FSQRLFMVLWLKGVTFNVTTV).

This sequence belongs to the chloride channel CLIC family. In terms of assembly, monomer. Homodimer (in vitro). Interacts with TRAPPC2. Dimerization requires a conformation change that leads to the exposure of a large hydrophobic surface. In vivo, this may lead to membrane insertion.

The protein localises to the nucleus. The protein resides in the nucleus membrane. Its subcellular location is the cytoplasm. It is found in the cell membrane. It localises to the endoplasmic reticulum. It catalyses the reaction L-dehydroascorbate + 2 glutathione = glutathione disulfide + L-ascorbate. It carries out the reaction chloride(in) = chloride(out). The catalysed reaction is iodide(out) = iodide(in). The enzyme catalyses thiocyanate(in) = thiocyanate(out). It catalyses the reaction nitrate(in) = nitrate(out). It carries out the reaction bromide(in) = bromide(out). The catalysed reaction is fluoride(in) = fluoride(out). In terms of biological role, in the soluble state, catalyzes glutaredoxin-like thiol disulfide exchange reactions with reduced glutathione as electron donor. Reduces selenite and dehydroascorbate and may act as an antioxidant during oxidative stress response. Can insert into membranes and form voltage-dependent multi-ion conductive channels. Membrane insertion seems to be redox-regulated and may occur only under oxidizing conditions. Involved in regulation of the cell cycle. This chain is Chloride intracellular channel protein 1 (CLIC1), found in Sus scrofa (Pig).